The primary structure comprises 430 residues: Tol-Pal system protein TolB (430 aa).

A signal peptide spans 1-21 (MKQALRVAFGFLMLWAAVLHA).

The protein belongs to the TolB family. In terms of assembly, the Tol-Pal system is composed of five core proteins: the inner membrane proteins TolA, TolQ and TolR, the periplasmic protein TolB and the outer membrane protein Pal. They form a network linking the inner and outer membranes and the peptidoglycan layer.

It localises to the periplasm. Functionally, part of the Tol-Pal system, which plays a role in outer membrane invagination during cell division and is important for maintaining outer membrane integrity. TolB occupies a key intermediary position in the Tol-Pal system because it communicates directly with both membrane-embedded components, Pal in the outer membrane and TolA in the inner membrane. The polypeptide is Tol-Pal system protein TolB (Salmonella typhi).